We begin with the raw amino-acid sequence, 726 residues long: Methionine--tRNA ligase (726 aa).

Residues 12 to 22 (PYVNNIPHLGN) carry the 'HIGH' region motif. Zn(2+) is bound by residues C143, C146, C155, and C158. Positions 330 to 334 (KFSKS) match the 'KMSKS' region motif. K333 is an ATP binding site. Residues 562 to 667 (FSEKVCLKVV…DNPIPGERII (106 aa)) form the tRNA-binding domain.

It belongs to the class-I aminoacyl-tRNA synthetase family. MetG type 1 subfamily. Homodimer. Zn(2+) serves as cofactor.

The protein localises to the cytoplasm. The enzyme catalyses tRNA(Met) + L-methionine + ATP = L-methionyl-tRNA(Met) + AMP + diphosphate. Functionally, is required not only for elongation of protein synthesis but also for the initiation of all mRNA translation through initiator tRNA(fMet) aminoacylation. This is Methionine--tRNA ligase from Borrelia turicatae (strain 91E135).